We begin with the raw amino-acid sequence, 388 residues long: Alcohol dehydrogenase patD (388 aa).

Zn(2+) is bound at residue Cys46. His47 provides a ligand contact to NAD(+). Zn(2+)-binding residues include His67, Glu68, Cys101, Cys104, and Cys112. Substrate is bound at residue His67. NAD(+) is bound by residues 198 to 203, 295 to 297, and 320 to 322; these read VALSRG, SLL, and EEA.

The protein belongs to the zinc-containing alcohol dehydrogenase family. Requires Zn(2+) as cofactor.

The protein localises to the cytoplasm. It localises to the cytosol. The catalysed reaction is neopatulin + NADPH + H(+) = (E)-ascladiol + NADP(+). The protein operates within mycotoxin biosynthesis; patulin biosynthesis. In terms of biological role, alcohol dehydrogenase; part of the gene cluster that mediates the biosynthesis of patulin, an acetate-derived tetraketide mycotoxin produced by several fungal species that shows antimicrobial properties against several bacteria. PatD catalyzes the conversion of neopatulin into E-ascladiol. The pathway begins with the synthesis of 6-methylsalicylic acid by the polyketide synthase (PKS) patK via condensation of acetate and malonate units. The 6-methylsalicylic acid decarboxylase patG then catalyzes the decarboxylation of 6-methylsalicylic acid to yield m-cresol (also known as 3-methylphenol). These first reactions occur in the cytosol. The intermediate m-cresol is then transported into the endoplasmic reticulum where the cytochrome P450 monooxygenase patH converts it to m-hydroxybenzyl alcohol, which is further converted to gentisyl alcohol by the cytochrome P450 monooxygenase patI. The oxidoreductases patJ and patO further convert gentisyl alcohol to isoepoxydon in the vacuole. PatN catalyzes then the transformation of isoepoxydon into phyllostine. The cluster protein patF is responsible for the conversion from phyllostine to neopatulin whereas the alcohol dehydrogenase patD converts neopatulin to E-ascladiol. The steps between isoepoxydon and E-ascladiol occur in the cytosol, and E-ascladiol is probably secreted to the extracellular space by one of the cluster-specific transporters patC or patM. Finally, the secreted patulin synthase patE catalyzes the conversion of E-ascladiol to patulin. This Aspergillus clavatus (strain ATCC 1007 / CBS 513.65 / DSM 816 / NCTC 3887 / NRRL 1 / QM 1276 / 107) protein is Alcohol dehydrogenase patD.